The primary structure comprises 528 residues: Nucleolar GTP-binding protein 1 (528 aa).

Positions 168-335 constitute an OBG-type G domain; the sequence is RTLLVCGFPN…VKAMACDLLL (168 aa). GTP-binding positions include 174 to 181, 220 to 224, and 287 to 290; these read GFPNVGKS, DTPGI, and SKSD. Residues 470 to 528 are disordered; that stretch reads PDSWKHRSRNSGGDIAVHVRRDSKTQVAQPPRLPSKKKARFDDKHYYDRKPKHLYRGRK. The span at 509–518 shows a compositional bias: basic and acidic residues; the sequence is RFDDKHYYDR. Residues 519 to 528 show a composition bias toward basic residues; it reads KPKHLYRGRK.

Belongs to the TRAFAC class OBG-HflX-like GTPase superfamily. OBG GTPase family. NOG subfamily.

It is found in the nucleus. The protein resides in the nucleolus. Its function is as follows. Involved in the biogenesis of the 60S ribosomal subunit. The sequence is that of Nucleolar GTP-binding protein 1 (NOG1) from Encephalitozoon cuniculi (strain GB-M1) (Microsporidian parasite).